We begin with the raw amino-acid sequence, 509 residues long: Maturase K (509 aa).

The protein belongs to the intron maturase 2 family. MatK subfamily.

Its subcellular location is the plastid. The protein resides in the chloroplast. In terms of biological role, usually encoded in the trnK tRNA gene intron. Probably assists in splicing its own and other chloroplast group II introns. This chain is Maturase K, found in Banksia cuneata (Quairading banksia).